Here is a 598-residue protein sequence, read N- to C-terminus: Biotin-dependent acyl-coenzyme A carboxylase alpha3 subunit (598 aa).

In terms of domain architecture, Biotin carboxylation spans 8 to 452; that stretch reads RIAKVLVANR…SFSVHTRWIE (445 aa). In terms of domain architecture, ATP-grasp spans 127–324; that stretch reads RHIAARAQAP…LVLQQFKIAN (198 aa). 155 to 216 contacts ATP; it reads AKEHGVPIAI…ERYLDKPRHV (62 aa). Glu-282, Glu-295, and Asn-297 together coordinate Mg(2+). Mn(2+)-binding residues include Glu-282, Glu-295, and Asn-297. Positions 506 to 531 are disordered; that stretch reads PAGVIRKKPKPRKRGGHTGAATSGDA. Residues 510 to 521 are compositionally biased toward basic residues; it reads IRKKPKPRKRGG. One can recognise a Biotinyl-binding domain in the interval 522–598; sequence HTGAATSGDA…TQGTVLAEIK (77 aa). An N6-biotinyllysine modification is found at Lys-564.

The biotin-dependent acyl-CoA carboxylase complex is composed of AccA3, which contains the biotin carboxylase (BC) and biotin carboxyl carrier protein (BCCP) domains, and an AccD protein, which contains the carboxyl transferase (CT) domain. Requires Mg(2+) as cofactor. Mn(2+) serves as cofactor. It depends on biotin as a cofactor.

The catalysed reaction is N(6)-biotinyl-L-lysyl-[protein] + hydrogencarbonate + ATP = N(6)-carboxybiotinyl-L-lysyl-[protein] + ADP + phosphate + H(+). It participates in lipid metabolism; fatty acid biosynthesis. Its pathway is lipid metabolism; mycolic acid biosynthesis. Its function is as follows. Component of a biotin-dependent acyl-CoA carboxylase complex. This subunit catalyzes the ATP-dependent carboxylation of the biotin carried by the biotin carboxyl carrier (BCC) domain, resulting in the formation of carboxyl biotin. The chain is Biotin-dependent acyl-coenzyme A carboxylase alpha3 subunit (bccA) from Mycobacterium leprae (strain TN).